A 156-amino-acid polypeptide reads, in one-letter code: Acanthoscurrin-1 (156 aa).

The signal sequence occupies residues 1 to 23 (MAFRMKLVVCIVLLSTLAVMSSA). K155 carries the post-translational modification Lysine amide.

Expressed in hemocytes and secreted into the plasma following bacterial immune challenge.

The protein localises to the secreted. Functionally, antimicrobial protein. Strong activity against the Gram-negative bacterium E.coli SBS363 and yeast C.albicans. No detectable activity against the Gram-positive bacterium M.luteus. In Acanthoscurria gomesiana (Tarantula spider), this protein is Acanthoscurrin-1.